The sequence spans 201 residues: Recombination protein RecR (201 aa).

The C4-type zinc finger occupies Cys-58–Cys-73. A Toprim domain is found at Thr-81–Pro-176.

The protein belongs to the RecR family.

May play a role in DNA repair. It seems to be involved in an RecBC-independent recombinational process of DNA repair. It may act with RecF and RecO. The chain is Recombination protein RecR from Halorhodospira halophila (strain DSM 244 / SL1) (Ectothiorhodospira halophila (strain DSM 244 / SL1)).